We begin with the raw amino-acid sequence, 164 residues long: uncharacterized protein (164 aa).

Residues 1-60 constitute a chloroplast transit peptide; that stretch reads MERSASVGVNDGRFGGNQFYSPSFSSSSSSSSMRHVNYSCGSCGYELNLSSTNRITSTIG.

It localises to the plastid. The protein resides in the chloroplast. This is an uncharacterized protein from Arabidopsis thaliana (Mouse-ear cress).